Reading from the N-terminus, the 148-residue chain is Probable transporter PD_1893 (148 aa).

4 helical membrane passes run 11-31 (FTVA…SEMI), 48-68 (NPSL…GMAL), 93-113 (IVFG…CPGP), and 118-138 (LSTG…GMII).

The protein belongs to the TsuA/YedE (TC 9.B.102) family.

It localises to the cell inner membrane. This chain is Probable transporter PD_1893, found in Xylella fastidiosa (strain Temecula1 / ATCC 700964).